Consider the following 245-residue polypeptide: Probable transcriptional regulatory protein LVIS_1199 (245 aa).

A disordered region spans residues 1–23; it reads MSGHSKWHNIQGRKNAQDAKRGK.

Belongs to the TACO1 family.

The protein localises to the cytoplasm. This is Probable transcriptional regulatory protein LVIS_1199 from Levilactobacillus brevis (strain ATCC 367 / BCRC 12310 / CIP 105137 / JCM 1170 / LMG 11437 / NCIMB 947 / NCTC 947) (Lactobacillus brevis).